The sequence spans 278 residues: 3-oxoacyl-[acyl-carrier-protein] reductase (278 aa).

Positions 13, 14, 16, 36, 40, 44, 66, 67, 77, 122, 125, and 126 each coordinate NADP(+). S182 acts as the Proton donor in catalysis. Residues Y198, K202, L230, and V231 each coordinate NADP(+). The Proton acceptor role is filled by Y198. K202 functions as the Lowers pKa of active site Tyr in the catalytic mechanism.

This sequence belongs to the short-chain dehydrogenases/reductases (SDR) family.

It is found in the mitochondrion. It carries out the reaction a (3R)-hydroxyacyl-[ACP] + NADP(+) = a 3-oxoacyl-[ACP] + NADPH + H(+). It participates in lipid metabolism; fatty acid biosynthesis. Functionally, involved in biosynthesis of fatty acids in mitochondria. This Saccharomyces cerevisiae (strain ATCC 204508 / S288c) (Baker's yeast) protein is 3-oxoacyl-[acyl-carrier-protein] reductase (OAR1).